Reading from the N-terminus, the 352-residue chain is B1 bradykinin receptor (352 aa).

Topologically, residues Met1–Thr41 are extracellular. 2 N-linked (GlcNAc...) asparagine glycosylation sites follow: Asn13 and Asn21. A helical membrane pass occupies residues Phe42–Leu62. The Cytoplasmic segment spans residues Leu63–Glu72. The helical transmembrane segment at Ile73–Ala93 threads the bilayer. At Glu94–Arg110 the chain is on the extracellular side. Cys109 and Cys188 are joined by a disulfide. The helical transmembrane segment at Val111–Ser131 threads the bilayer. Residues Gln132–Ala153 are Cytoplasmic-facing. A helical membrane pass occupies residues Arg154 to Leu174. Over Arg175 to Asn206 the chain is Extracellular. Residue Asn184 is glycosylated (N-linked (GlcNAc...) asparagine). Residues Ile207–Ser227 traverse the membrane as a helical segment. At Leu228 to Leu250 the chain is on the cytoplasmic side. Residues Ile251–Leu271 form a helical membrane-spanning segment. Residues Glu272–Gln294 are Extracellular-facing. The chain crosses the membrane as a helical span at residues Leu295 to Gly315. The Cytoplasmic portion of the chain corresponds to Arg316–Asn352. Residue Cys329 is the site of S-palmitoyl cysteine attachment.

It belongs to the G-protein coupled receptor 1 family. Bradykinin receptor subfamily. BDKRB1 sub-subfamily.

The protein localises to the cell membrane. This is a receptor for bradykinin. Could be a factor in chronic pain and inflammation. This is B1 bradykinin receptor (BDKRB1) from Macaca mulatta (Rhesus macaque).